The primary structure comprises 372 residues: Lipid-A-disaccharide synthase (372 aa).

It belongs to the LpxB family.

The catalysed reaction is a lipid X + a UDP-2-N,3-O-bis[(3R)-3-hydroxyacyl]-alpha-D-glucosamine = a lipid A disaccharide + UDP + H(+). The protein operates within bacterial outer membrane biogenesis; LPS lipid A biosynthesis. Condensation of UDP-2,3-diacylglucosamine and 2,3-diacylglucosamine-1-phosphate to form lipid A disaccharide, a precursor of lipid A, a phosphorylated glycolipid that anchors the lipopolysaccharide to the outer membrane of the cell. The protein is Lipid-A-disaccharide synthase of Thiobacillus denitrificans (strain ATCC 25259 / T1).